The chain runs to 593 residues: NADH-quinone oxidoreductase subunit C/D (593 aa).

The segment at 1–184 (MTADNAIFIP…DPYSLTLAKQ (184 aa)) is NADH dehydrogenase I subunit C. The segment at 208-593 (DYMFLNLGPN…IDFVMADVDR (386 aa)) is NADH dehydrogenase I subunit D.

This sequence in the N-terminal section; belongs to the complex I 30 kDa subunit family. In the C-terminal section; belongs to the complex I 49 kDa subunit family. In terms of assembly, NDH-1 is composed of 13 different subunits. Subunits NuoB, CD, E, F, and G constitute the peripheral sector of the complex.

It is found in the cell inner membrane. It carries out the reaction a quinone + NADH + 5 H(+)(in) = a quinol + NAD(+) + 4 H(+)(out). NDH-1 shuttles electrons from NADH, via FMN and iron-sulfur (Fe-S) centers, to quinones in the respiratory chain. The immediate electron acceptor for the enzyme in this species is believed to be ubiquinone. Couples the redox reaction to proton translocation (for every two electrons transferred, four hydrogen ions are translocated across the cytoplasmic membrane), and thus conserves the redox energy in a proton gradient. This is NADH-quinone oxidoreductase subunit C/D from Pseudomonas putida (strain W619).